Reading from the N-terminus, the 283-residue chain is uncharacterized protein (283 aa).

Residue tyrosine 55 is the Proton donor of the active site.

Belongs to the aldo/keto reductase family.

The protein resides in the cytoplasm. It localises to the nucleus. This is an uncharacterized protein from Schizosaccharomyces pombe (strain 972 / ATCC 24843) (Fission yeast).